Here is a 344-residue protein sequence, read N- to C-terminus: tRNA N6-adenosine threonylcarbamoyltransferase (344 aa).

Residues histidine 110 and histidine 114 each coordinate Fe cation. Substrate is bound by residues 133–137 (VVSGA), aspartate 166, glycine 179, and asparagine 278. Residue aspartate 303 coordinates Fe cation.

This sequence belongs to the KAE1 / TsaD family. Fe(2+) serves as cofactor.

Its subcellular location is the cytoplasm. The enzyme catalyses L-threonylcarbamoyladenylate + adenosine(37) in tRNA = N(6)-L-threonylcarbamoyladenosine(37) in tRNA + AMP + H(+). In terms of biological role, required for the formation of a threonylcarbamoyl group on adenosine at position 37 (t(6)A37) in tRNAs that read codons beginning with adenine. Is involved in the transfer of the threonylcarbamoyl moiety of threonylcarbamoyl-AMP (TC-AMP) to the N6 group of A37, together with TsaE and TsaB. TsaD likely plays a direct catalytic role in this reaction. This is tRNA N6-adenosine threonylcarbamoyltransferase from Chlamydia pneumoniae (Chlamydophila pneumoniae).